We begin with the raw amino-acid sequence, 424 residues long: UPF0229 protein PputGB1_0427 (424 aa).

The tract at residues 81-107 is disordered; the sequence is EFTAGEHIPRPQGGGGGGGGRGKAGNS. Gly residues predominate over residues 92 to 107; it reads QGGGGGGGGRGKAGNS.

It belongs to the UPF0229 family.

The polypeptide is UPF0229 protein PputGB1_0427 (Pseudomonas putida (strain GB-1)).